An 803-amino-acid polypeptide reads, in one-letter code: Ribonucleoside-diphosphate reductase large chain (803 aa).

The region spanning 1 to 91 (MYVVNRKGEE…TSNLHKNTSS (91 aa)) is the ATP-cone domain. ATP contacts are provided by residues 5 to 6 (NR), 11 to 17 (EPVSFDQ), threonine 52, and aspartate 56. Serine 215 is a GDP binding site. A disulfide bridge links cysteine 216 with cysteine 442. Residues 224 to 226 (DSI), lysine 241, arginine 254, and 261 to 262 (RG) contribute to the dTTP site. A GDP-binding site is contributed by asparagine 425. The active-site Proton acceptor is asparagine 425. The active-site Cysteine radical intermediate is the cysteine 427. Residues glutamate 429 and 604-607 (TAST) contribute to the GDP site. The active-site Proton acceptor is the glutamate 429.

Belongs to the ribonucleoside diphosphate reductase large chain family. In terms of assembly, heterodimer of a large and a small subunit.

The catalysed reaction is a 2'-deoxyribonucleoside 5'-diphosphate + [thioredoxin]-disulfide + H2O = a ribonucleoside 5'-diphosphate + [thioredoxin]-dithiol. Its activity is regulated as follows. Under complex allosteric control mediated by deoxynucleoside triphosphates and ATP binding to separate specificity and activation sites on the large subunit. The type of nucleotide bound at the specificity site determines substrate preference. It seems probable that ATP makes the enzyme reduce CDP and UDP, dGTP favors ADP reduction and dTTP favors GDP reduction. Stimulated by ATP and inhibited by dATP binding to the activity site. Its function is as follows. Provides the precursors necessary for DNA synthesis. Catalyzes the biosynthesis of deoxyribonucleotides from the corresponding ribonucleotides. The protein is Ribonucleoside-diphosphate reductase large chain (RNR1) of Cryptosporidium parvum.